The primary structure comprises 590 residues: Cytosolic Fe-S cluster assembly factor nar1 (590 aa).

C20 provides a ligand contact to [4Fe-4S] cluster. The tract at residues 25 to 50 (ESLPQKQSNENPYEVTTEDKVQPENP) is disordered. Residues C60, C63, C66, C204, and C259 each contribute to the [4Fe-4S] cluster site. The tract at residues 423-446 (PGAKVATGQTAGGRRQPISRNGAS) is disordered. [4Fe-4S] cluster-binding residues include C461 and C465.

This sequence belongs to the NARF family.

Component of the cytosolic Fe/S protein assembly machinery. Required for maturation of extramitochondrial Fe/S proteins. May play a role in the transfer of pre-assembled Fe/S clusters to target apoproteins. The chain is Cytosolic Fe-S cluster assembly factor nar1 (nar1) from Emericella nidulans (strain FGSC A4 / ATCC 38163 / CBS 112.46 / NRRL 194 / M139) (Aspergillus nidulans).